Reading from the N-terminus, the 276-residue chain is Elongation factor Ts (276 aa).

Residues threonine 80 to valine 83 are involved in Mg(2+) ion dislocation from EF-Tu.

It belongs to the EF-Ts family.

It localises to the cytoplasm. Functionally, associates with the EF-Tu.GDP complex and induces the exchange of GDP to GTP. It remains bound to the aminoacyl-tRNA.EF-Tu.GTP complex up to the GTP hydrolysis stage on the ribosome. This is Elongation factor Ts from Acidothermus cellulolyticus (strain ATCC 43068 / DSM 8971 / 11B).